The sequence spans 534 residues: Bifunctional purine biosynthesis protein PurH (534 aa).

Residues 1–148 form the MGS-like domain; the sequence is MNTVRPIRRA…KNHQDVTIVV (148 aa).

This sequence belongs to the PurH family.

The catalysed reaction is (6R)-10-formyltetrahydrofolate + 5-amino-1-(5-phospho-beta-D-ribosyl)imidazole-4-carboxamide = 5-formamido-1-(5-phospho-D-ribosyl)imidazole-4-carboxamide + (6S)-5,6,7,8-tetrahydrofolate. It carries out the reaction IMP + H2O = 5-formamido-1-(5-phospho-D-ribosyl)imidazole-4-carboxamide. It participates in purine metabolism; IMP biosynthesis via de novo pathway; 5-formamido-1-(5-phospho-D-ribosyl)imidazole-4-carboxamide from 5-amino-1-(5-phospho-D-ribosyl)imidazole-4-carboxamide (10-formyl THF route): step 1/1. Its pathway is purine metabolism; IMP biosynthesis via de novo pathway; IMP from 5-formamido-1-(5-phospho-D-ribosyl)imidazole-4-carboxamide: step 1/1. This chain is Bifunctional purine biosynthesis protein PurH, found in Shewanella denitrificans (strain OS217 / ATCC BAA-1090 / DSM 15013).